The sequence spans 44 residues: Cytochrome b559 subunit beta (44 aa).

A helical transmembrane segment spans residues Trp19–Ala35. Residue His23 participates in heme binding.

This sequence belongs to the PsbE/PsbF family. As to quaternary structure, heterodimer of an alpha subunit and a beta subunit. PSII is composed of 1 copy each of membrane proteins PsbA, PsbB, PsbC, PsbD, PsbE, PsbF, PsbH, PsbI, PsbJ, PsbK, PsbL, PsbM, PsbT, PsbX, PsbY, PsbZ, Psb30/Ycf12, peripheral proteins PsbO, CyanoQ (PsbQ), PsbU, PsbV and a large number of cofactors. It forms dimeric complexes. Requires heme b as cofactor.

It is found in the cellular thylakoid membrane. This b-type cytochrome is tightly associated with the reaction center of photosystem II (PSII). PSII is a light-driven water:plastoquinone oxidoreductase that uses light energy to abstract electrons from H(2)O, generating O(2) and a proton gradient subsequently used for ATP formation. It consists of a core antenna complex that captures photons, and an electron transfer chain that converts photonic excitation into a charge separation. The protein is Cytochrome b559 subunit beta of Synechococcus elongatus (strain ATCC 33912 / PCC 7942 / FACHB-805) (Anacystis nidulans R2).